The primary structure comprises 201 residues: Holliday junction branch migration complex subunit RuvA (201 aa).

A domain I region spans residues 1–64 (MIGRLHGKII…EDAHLLFGFA (64 aa)). A domain II region spans residues 65 to 143 (QKQDRTLFRE…GVAQSDFFEE (79 aa)). A flexible linker region spans residues 144 to 154 (HSVETIVATHS). Residues 154 to 201 (SHDPADEARDALVALGYKLADAEKMIKKVNKAGATSEQLIREALKASL) form a domain III region.

It belongs to the RuvA family. As to quaternary structure, homotetramer. Forms an RuvA(8)-RuvB(12)-Holliday junction (HJ) complex. HJ DNA is sandwiched between 2 RuvA tetramers; dsDNA enters through RuvA and exits via RuvB. An RuvB hexamer assembles on each DNA strand where it exits the tetramer. Each RuvB hexamer is contacted by two RuvA subunits (via domain III) on 2 adjacent RuvB subunits; this complex drives branch migration. In the full resolvosome a probable DNA-RuvA(4)-RuvB(12)-RuvC(2) complex forms which resolves the HJ.

Its subcellular location is the cytoplasm. In terms of biological role, the RuvA-RuvB-RuvC complex processes Holliday junction (HJ) DNA during genetic recombination and DNA repair, while the RuvA-RuvB complex plays an important role in the rescue of blocked DNA replication forks via replication fork reversal (RFR). RuvA specifically binds to HJ cruciform DNA, conferring on it an open structure. The RuvB hexamer acts as an ATP-dependent pump, pulling dsDNA into and through the RuvAB complex. HJ branch migration allows RuvC to scan DNA until it finds its consensus sequence, where it cleaves and resolves the cruciform DNA. In Actinobacillus pleuropneumoniae serotype 7 (strain AP76), this protein is Holliday junction branch migration complex subunit RuvA.